The primary structure comprises 842 residues: Glucans biosynthesis glucosyltransferase H (842 aa).

Helical transmembrane passes span 140-160, 194-214, 513-533, 568-588, 615-635, 656-676, and 680-700; these read ILLL…KTIL, ILIL…TALM, VFLT…FLAL, IALF…SIIL, VLLA…AFLG, FMRH…MAWL, and FLFW…VSAI.

This sequence belongs to the glycosyltransferase 2 family. OpgH subfamily.

It is found in the cell inner membrane. Its pathway is glycan metabolism; osmoregulated periplasmic glucan (OPG) biosynthesis. Its function is as follows. Involved in the biosynthesis of osmoregulated periplasmic glucans (OPGs). This Klebsiella pneumoniae subsp. pneumoniae (strain ATCC 700721 / MGH 78578) protein is Glucans biosynthesis glucosyltransferase H.